The sequence spans 256 residues: Hydroxyacylglutathione hydrolase (256 aa).

Residues histidine 57, histidine 59, aspartate 61, histidine 62, histidine 115, aspartate 134, and histidine 172 each contribute to the Zn(2+) site.

Belongs to the metallo-beta-lactamase superfamily. Glyoxalase II family. In terms of assembly, monomer. Requires Zn(2+) as cofactor.

The enzyme catalyses an S-(2-hydroxyacyl)glutathione + H2O = a 2-hydroxy carboxylate + glutathione + H(+). The protein operates within secondary metabolite metabolism; methylglyoxal degradation; (R)-lactate from methylglyoxal: step 2/2. Its function is as follows. Thiolesterase that catalyzes the hydrolysis of S-D-lactoyl-glutathione to form glutathione and D-lactic acid. This Maricaulis maris (strain MCS10) (Caulobacter maris) protein is Hydroxyacylglutathione hydrolase.